A 187-amino-acid chain; its full sequence is Ribosome maturation factor RimM (187 aa).

In terms of domain architecture, PRC barrel spans 91–183 (DDGFYDHELE…ILVLTPPEGL (93 aa)).

Belongs to the RimM family. As to quaternary structure, binds ribosomal protein uS19.

It localises to the cytoplasm. An accessory protein needed during the final step in the assembly of 30S ribosomal subunit, possibly for assembly of the head region. Essential for efficient processing of 16S rRNA. May be needed both before and after RbfA during the maturation of 16S rRNA. It has affinity for free ribosomal 30S subunits but not for 70S ribosomes. This chain is Ribosome maturation factor RimM, found in Corynebacterium jeikeium (strain K411).